Consider the following 308-residue polypeptide: uncharacterized protein (308 aa).

Transmembrane regions (helical) follow at residues 10-30 (IILLSSIGITIASIIVETNLI), 91-111 (LPTILGESVFRVQLPLAVVIL), 115-135 (LGLIYVSLNVISGFLQALIGI), 178-198 (VIPMIVIFTLLINFLIKLGLM), 219-239 (ITVLIANLAHFSAGYTTVDIL), 251-271 (LIVLLIGNIISVTMIYLKHSI), and 288-308 (INYTISVMIKILLILLLIAFF).

It to M.jannaschii MJ0871, MJ1556 and MJ1589.

The protein resides in the cell membrane. This is an uncharacterized protein from Methanocaldococcus jannaschii (strain ATCC 43067 / DSM 2661 / JAL-1 / JCM 10045 / NBRC 100440) (Methanococcus jannaschii).